Reading from the N-terminus, the 282-residue chain is Biotin synthase (282 aa).

The region spanning 1–228 (MQEIFLCSIS…NARLMVAGGR (228 aa)) is the Radical SAM core domain. The [4Fe-4S] cluster site is built by cysteine 17, cysteine 21, and cysteine 24. Residues cysteine 61, cysteine 96, cysteine 154, and arginine 221 each coordinate [2Fe-2S] cluster.

Belongs to the radical SAM superfamily. Biotin synthase family. As to quaternary structure, homodimer. [4Fe-4S] cluster serves as cofactor. It depends on [2Fe-2S] cluster as a cofactor.

It catalyses the reaction (4R,5S)-dethiobiotin + (sulfur carrier)-SH + 2 reduced [2Fe-2S]-[ferredoxin] + 2 S-adenosyl-L-methionine = (sulfur carrier)-H + biotin + 2 5'-deoxyadenosine + 2 L-methionine + 2 oxidized [2Fe-2S]-[ferredoxin]. The protein operates within cofactor biosynthesis; biotin biosynthesis; biotin from 7,8-diaminononanoate: step 2/2. Catalyzes the conversion of dethiobiotin (DTB) to biotin by the insertion of a sulfur atom into dethiobiotin via a radical-based mechanism. The polypeptide is Biotin synthase (Helicobacter pylori (strain HPAG1)).